A 501-amino-acid polypeptide reads, in one-letter code: Ribose import ATP-binding protein RbsA (501 aa).

2 consecutive ABC transporter domains span residues 5–241 and 252–495; these read LQLK…VGRK and APGD…VGKL. 37-44 serves as a coordination point for ATP; that stretch reads GENGAGKS.

This sequence belongs to the ABC transporter superfamily. Ribose importer (TC 3.A.1.2.1) family. As to quaternary structure, the complex is composed of an ATP-binding protein (RbsA), two transmembrane proteins (RbsC) and a solute-binding protein (RbsB).

The protein localises to the cell inner membrane. The enzyme catalyses D-ribose(out) + ATP + H2O = D-ribose(in) + ADP + phosphate + H(+). Its function is as follows. Part of the ABC transporter complex RbsABC involved in ribose import. Responsible for energy coupling to the transport system. The sequence is that of Ribose import ATP-binding protein RbsA from Escherichia coli O6:H1 (strain CFT073 / ATCC 700928 / UPEC).